The primary structure comprises 332 residues: C4-dicarboxylate-binding periplasmic protein DctP (332 aa).

The first 22 residues, 1–22, serve as a signal peptide directing secretion; sequence MFKPLTLIAASILAVTSFNAAA.

Belongs to the bacterial solute-binding protein 7 family. As to quaternary structure, the complex comprises the extracytoplasmic solute receptor protein DctP, and the two transmembrane proteins DctQ and DctM.

It is found in the periplasm. Functionally, part of the tripartite ATP-independent periplasmic (TRAP) transport system DctPQM involved in C4-dicarboxylates uptake. The polypeptide is C4-dicarboxylate-binding periplasmic protein DctP (Vibrio cholerae serotype O1 (strain ATCC 39315 / El Tor Inaba N16961)).